The sequence spans 732 residues: Polyribonucleotide nucleotidyltransferase (732 aa).

Residues D515 and D521 each contribute to the Mg(2+) site. The KH domain occupies 581–641 (PKLELFNVDP…KNVDAAKDYI (61 aa)). One can recognise an S1 motif domain in the interval 672 to 731 (GDEFTGSVKSVVDFGVFIELKDGVDGLLHISKIKSPLNVGDQVKVCVSEQKGNKISLSLV).

The protein belongs to the polyribonucleotide nucleotidyltransferase family. The cofactor is Mg(2+).

The protein localises to the cytoplasm. It catalyses the reaction RNA(n+1) + phosphate = RNA(n) + a ribonucleoside 5'-diphosphate. Involved in mRNA degradation. Catalyzes the phosphorolysis of single-stranded polyribonucleotides processively in the 3'- to 5'-direction. The protein is Polyribonucleotide nucleotidyltransferase of Campylobacter concisus (strain 13826).